The sequence spans 596 residues: Clathrin heavy chain linker domain-containing protein 1 (596 aa).

Residues 129–241 (QLEAKMRIIE…RDIAENLKKD (113 aa)) adopt a coiled-coil conformation.

The chain is Clathrin heavy chain linker domain-containing protein 1 (Clhc1) from Mus musculus (Mouse).